The chain runs to 2768 residues: Thyroglobulin (2768 aa).

The N-terminal stretch at 1–19 is a signal peptide; sequence MALVLEIFTLLASICWVSA. Tyr24 carries the post-translational modification Iodotyrosine; alternate. Tyr24 is modified (sulfotyrosine; alternate). Tyr24 bears the Thyroxine; alternate mark. A Triiodothyronine; alternate modification is found at Tyr24. Thyroglobulin type-1 domains lie at 31–92, 93–160, 161–297, and 298–358; these read LRPC…PVAC, LSFC…PKRC, PRSC…RFRC, and PTKC…PPSC. 18 disulfide bridges follow: Cys34-Cys52, Cys63-Cys70, Cys72-Cys92, Cys96-Cys120, Cys131-Cys138, Cys140-Cys160, Cys164-Cys183, Cys194-Cys235, Cys237-Cys297, Cys301-Cys319, Cys330-Cys336, Cys338-Cys358, Cys364-Cys620, Cys408-Cys608, Cys631-Cys636, Cys638-Cys658, Cys662-Cys687, and Cys698-Cys703. Asn76 is a glycosylation site (N-linked (GlcNAc...) asparagine). Tyr108 bears the Iodotyrosine mark. Residue Asn110 is glycosylated (N-linked (GlcNAc...) asparagine). Tyr149 carries the iodotyrosine; alternate modification. At Tyr149 the chain carries Diiodotyrosine; alternate. The N-linked (GlcNAc...) asparagine glycan is linked to Asn198. An iodotyrosine mark is found at Tyr234 and Tyr258. Asn484 and Asn529 each carry an N-linked (GlcNAc...) asparagine glycan. The segment at 521–545 is disordered; sequence PLSVGLDSNSSTGTPEAAKKDGTMN. 6 consecutive Thyroglobulin type-1 domains span residues 605–658, 659–726, 727–921, 922–1073, 1074–1145, and 1146–1210; these read SQTC…QPRC, PTDC…PKKC, PTPC…LPTC, PGSC…IPQC, PTTC…SAQC, and PSLC…QPAC. The residue at position 704 (Tyr704) is an Iodotyrosine; alternate. Tyr704 bears the Thyroxine; alternate mark. Position 704 is a triiodothyronine; alternate (Tyr704). A Diiodotyrosine; alternate modification is found at Tyr704. Cystine bridges form between Cys705/Cys726, Cys730/Cys763, Cys774/Cys898, Cys900/Cys921, Cys925/Cys1031, Cys1042/Cys1049, Cys1051/Cys1073, Cys1077/Cys1108, Cys1126/Cys1145, Cys1149/Cys1169, Cys1181/Cys1188, Cys1190/Cys1210, Cys1215/Cys1264, Cys1231/Cys1245, Cys1306/Cys1356, and Cys1331/Cys1347. The N-linked (GlcNAc...) asparagine glycan is linked to Asn748. At Tyr785 the chain carries Iodotyrosine. A glycan (N-linked (GlcNAc...) asparagine) is linked at Asn816. An Iodotyrosine; alternate modification is found at Tyr866. Diiodotyrosine; alternate is present on Tyr866. Tyr883 carries the diiodotyrosine modification. Asn947 carries an N-linked (GlcNAc...) asparagine glycan. Tyr992 bears the Iodotyrosine; alternate mark. Tyr992 is modified (diiodotyrosine; alternate). N-linked (GlcNAc...) asparagine glycosylation is present at Asn1220. Residue Tyr1310 is modified to Iodotyrosine. Thyroxine is present on Tyr1310. N-linked (GlcNAc...) asparagine glycans are attached at residues Asn1348, Asn1349, and Asn1365. 9 disulfide bridges follow: Cys1440/Cys1459, Cys1462/Cys1473, Cys1476/Cys1490, Cys1493/Cys1510, Cys1514/Cys1523, Cys1543/Cys1565, Cys1603/Cys1627, Cys1607/Cys1613, and Cys1639/Cys1662. Type II repeat units follow at residues 1456 to 1469, 1470 to 1486, and 1487 to 1503; these read GLGC…SYSQ, DEEC…EQAG, and SLAC…ISAG. Residue Tyr1467 is modified to Iodotyrosine; alternate. At Tyr1467 the chain carries Diiodotyrosine; alternate. Residues 1511–1565 form the Thyroglobulin type-1 11 domain; the sequence is VTDCQRNEAGLQCDQNGQYRASQKDRGSGKAFCVDGEGRRLPWWETEAPLEDSQC. The Type IIIA repeat unit spans residues 1603–1723; sequence CLTDCTEDEA…GANLTDAHLF (121 aa). N-linked (GlcNAc...) asparagine glycosylation is present at Asn1716. Disulfide bonds link Cys1724–Cys1749, Cys1728–Cys1734, Cys1733–Cys1835, and Cys1760–Cys1777. The Type IIIB repeat unit spans residues 1724-1892; that stretch reads CLLACDRDLC…LFSAQQANLW (169 aa). N-linked (GlcNAc...) asparagine glycans are attached at residues Asn1774 and Asn1869. 7 disulfide bridges follow: Cys1893–Cys1919, Cys1897–Cys1904, Cys1928–Cys1939, Cys1996–Cys2024, Cys2000–Cys2006, Cys2005–Cys2076, and Cys2035–Cys2048. Residues 1893–1995 form a Type IIIA repeat; the sequence is CLSRCVQEHS…EKSISNGFFE (103 aa). The stretch at 1996 to 2129 is one Type IIIB repeat; the sequence is CERRCDADPC…TSNFSAVRDL (134 aa). An N-linked (GlcNAc...) asparagine glycan is attached at Asn2013. The N-linked (GlcNAc...) asparagine glycan is linked to Asn2122. 3 disulfides stabilise this stretch: Cys2130/Cys2154, Cys2134/Cys2140, and Cys2163/Cys2172. One copy of the Type IIIA repeat lies at 2130 to 2187; that stretch reads CLSECSQHEACLITTLQTQPGAVRCMFYADTQSCTHSLQGQNCRLLLREEATHIYRKP. Tyr2184 carries the iodotyrosine modification. The interval 2188–2768 is cholinesterase-like (ChEL); the sequence is GISLLSYEAS…QEPGSKTYSK (581 aa). Asn2250 carries N-linked (GlcNAc...) asparagine glycosylation. Residues Cys2264 and Cys2281 are joined by a disulfide bond. Asn2295 carries N-linked (GlcNAc...) asparagine glycosylation. Cys2442 and Cys2453 are disulfide-bonded. Position 2540 is an iodotyrosine (Tyr2540). The residue at position 2573 (Tyr2573) is an Iodotyrosine; alternate. Tyr2573 carries the post-translational modification Thyroxine; alternate. At Tyr2573 the chain carries Triiodothyronine; alternate. Tyr2573 bears the Diiodotyrosine; alternate mark. Asn2582 carries an N-linked (GlcNAc...) asparagine glycan. Iodotyrosine is present on residues Tyr2587 and Tyr2617. A disulfide bond links Cys2591 and Cys2715. The residue at position 2697 (Tyr2697) is a Diiodotyrosine. The disordered stretch occupies residues 2727 to 2768; it reads TSADGAKGGQSAESEEEELTAGSGLREDLLSLQEPGSKTYSK. O-linked (Xyl...) (chondroitin sulfate) serine glycosylation is present at Ser2749. Tyr2766 is modified (iodotyrosine; alternate). Tyr2766 is subject to Thyroxine; alternate. A Triiodothyronine; alternate modification is found at Tyr2766. Tyr2766 carries the diiodotyrosine; alternate modification.

The protein belongs to the type-B carboxylesterase/lipase family. As to quaternary structure, monomer. Homodimer (via ChEL region); occurs in the endoplasmic reticulum and is required for export to the Golgi apparatus. Homooligomer; disulfide-linked; stored in this form in the thyroid follicle lumen. Iodinated on tyrosine residues by TPO. There are 4 pairs of iodinated tyrosines used for coupling: acceptor Tyr-24 is coupled to donor Tyr-149 or Tyr-234, acceptor Tyr-2573 is coupled to donor Tyr-2540, acceptor Tyr-2766 in monomer 1 is coupled to donor Tyr-2766 in monomer 2 and acceptor Tyr-1310 in monomer 1 is coupled to donor Tyr-108 in monomer 2. Post-translationally, sulfated tyrosines are desulfated during iodination. In terms of processing, undergoes sequential proteolysis by cathepsins to release thyroxine (T4) and triiodothyronine (T3) hormones. In the thyroid follicle lumen, cross-linked TG (storage form) is solubilized by limited proteolysis mediated by cathepsins CTSB and/or CTSL. Partially cleaved TG is further processed by CTSK/cathepsin K and/or CTSL resulting in the release of T4. Following endocytosis, further processing occurs leading to the release of T3 and more T4 hormones. As to expression, specifically expressed in the thyroid gland.

The protein resides in the secreted. Acts as a substrate for the production of iodinated thyroid hormones thyroxine (T4) and triiodothyronine (T3). The synthesis of T3 and T4 involves iodination of selected tyrosine residues of TG/thyroglobulin followed by their oxidative coupling in the thyroid follicle lumen. Following TG re-internalization and lysosomal-mediated proteolysis, T3 and T4 are released from the polypeptide backbone leading to their secretion into the bloodstream. One dimer produces 7 thyroid hormone molecules. The chain is Thyroglobulin from Homo sapiens (Human).